Reading from the N-terminus, the 57-residue chain is Putative antitoxin VapB4 (57 aa).

In terms of biological role, possibly the antitoxin component of a type II toxin-antitoxin (TA) system. Its cognate toxin is VapC4 (Potential). The chain is Putative antitoxin VapB4 (vapB4) from Methanocaldococcus jannaschii (strain ATCC 43067 / DSM 2661 / JAL-1 / JCM 10045 / NBRC 100440) (Methanococcus jannaschii).